The chain runs to 335 residues: MEYFDIEEVSSKILHELLQYRRRFPESEHTIQYEENKVSEVQLPRIRAFVEQGKPIECILPAFPTKSPNPRKVLGKMPDMAEKLSLMFLNSLCQRIQLYYPPGAKIIICSDGHVFSDLIHVDDNTITDYQVEIEKLLHESGATHLSVFNLGNVESLTQYTDDYDQLRELLVKNYASSTEEIKAILKENEEGLLLYRAITRFLYEDSLLPEYTGSKNALQKDARQRSVGVIQRSWAWGNLLAEQFPQAIRLSIHPQSVESLKLGIHMMPTRDDWLTPWHGVAANINGQFVLMKSDEVKNLQGKLIHIRGVPSHYVIETESERNQEIEPIAEAVHAG.

This sequence belongs to the isocyanide synthase family.

The catalysed reaction is D-ribulose 5-phosphate + L-tyrosine = (2S)-3-(4-hydroxyphenyl)-2-isocyanopropanoate + hydroxyacetone + formaldehyde + phosphate + H2O + H(+). Its function is as follows. Involved in the biosynthesis of rhabduscin, a tyrosine derivative which is a potent inhibitor of phenoloxidase, a key component of the insect's innate immune system. Responsible for the synthesis of the isonitrile group on tyrosine using the C2 of ribulose 5-phosphate as the source of the carbon atom. The chain is L-tyrosine isonitrile synthase from Xenorhabdus nematophila (strain ATCC 19061 / DSM 3370 / CCUG 14189 / LMG 1036 / NCIMB 9965 / AN6).